A 1009-amino-acid chain; its full sequence is Glutamate receptor ionotropic, delta-2 (1009 aa).

An N-terminal signal peptide occupies residues 1 to 23 (MKVFPAVLFLITFWSLEWEPVLP). Over 24–566 (DSIIHIGAIF…DMFACLAPFD (543 aa)) the chain is Extracellular. N-linked (GlcNAc...) asparagine glycosylation is found at Asn293, Asn306, Asn390, and Asn426. Ca(2+) is bound by residues Glu531, Val534, and Asp535. A helical membrane pass occupies residues 567–587 (LSLWACIAGTVLLVGTLVYLL). The Cytoplasmic portion of the chain corresponds to 588–635 (NWLNPPRLPMGSVSSTTLYNSMWFVYGSFVQQGGEVPYTTLATRMMMG). A helical membrane pass occupies residues 636–656 (VWWLFALIVISSYTANLAAFL). Topologically, residues 657 to 830 (TISRIENSIQ…KSGSALDIHS (174 aa)) are extracellular. N-linked (GlcNAc...) asparagine glycosylation is present at Asn713. The Ca(2+) site is built by Asp753, Asp755, and Ser757. Residues 831–851 (FAGVFFVLAAGVVLSCLIATV) form a helical membrane-spanning segment. Over 852–1009 (ETWWTRRKGS…GNDPDRGTSI (158 aa)) the chain is Cytoplasmic. A disordered region spans residues 989–1009 (YQPTPAPNFSYGNDPDRGTSI).

Belongs to the glutamate-gated ion channel (TC 1.A.10.1) family. GRID2 subfamily. As to quaternary structure, tetramer; dimer of dimers. In terms of tissue distribution, expressed in cerebellar Purkinje cells, in crest cells in the medial octavolateral nucleus and in type I neurons of the optic tectum.

It localises to the postsynaptic cell membrane. The enzyme catalyses Ca(2+)(in) = Ca(2+)(out). It catalyses the reaction Na(+)(in) = Na(+)(out). In terms of biological role, member of the ionotropic glutamate receptor family, which plays a crucial role in synaptic organization and signal transduction in the central nervous system. Although it shares structural features with ionotropic glutamate receptors, does not bind glutamate as a primary ligand. Promotes synaptogenesis and mediates the D-Serine-dependent long term depression signals and AMPA receptor endocytosis of cerebellar parallel fiber-Purkinje cell (PF-PC) synapses through the NRX1B-CBLN1-GRID2 triad complex. In the presence of neurexins and cerebellins, forms cation-selective channels that are proposed to be gated by glycine and D-serine. However, recent research disputes this ligand-gated cation channel activity. Cation-selective ion channel activity can be triggered by GRM1 in Purkinje cells. The chain is Glutamate receptor ionotropic, delta-2 from Danio rerio (Zebrafish).